The sequence spans 82 residues: Putative membrane protein insertion efficiency factor (82 aa).

This sequence belongs to the UPF0161 family.

The protein resides in the cell inner membrane. In terms of biological role, could be involved in insertion of integral membrane proteins into the membrane. The protein is Putative membrane protein insertion efficiency factor of Rickettsia rickettsii (strain Iowa).